The primary structure comprises 157 residues: Phosphopantetheine adenylyltransferase (157 aa).

Residue S8 participates in substrate binding. ATP contacts are provided by residues 8-9 and H16; that span reads SF. Positions 40, 72, and 86 each coordinate substrate. ATP contacts are provided by residues 87 to 89, E97, and 121 to 127; these read GLR and FGTISSS.

This sequence belongs to the bacterial CoaD family. In terms of assembly, homohexamer. It depends on Mg(2+) as a cofactor.

It is found in the cytoplasm. It catalyses the reaction (R)-4'-phosphopantetheine + ATP + H(+) = 3'-dephospho-CoA + diphosphate. It functions in the pathway cofactor biosynthesis; coenzyme A biosynthesis; CoA from (R)-pantothenate: step 4/5. Functionally, reversibly transfers an adenylyl group from ATP to 4'-phosphopantetheine, yielding dephospho-CoA (dPCoA) and pyrophosphate. The sequence is that of Phosphopantetheine adenylyltransferase from Cutibacterium acnes (strain DSM 16379 / KPA171202) (Propionibacterium acnes).